The following is a 200-amino-acid chain: Large ribosomal subunit protein uL4 (200 aa).

The tract at residues 42 to 65 is disordered; the sequence is TRAQKTRSEVSGGGAKPWRQKGTG.

It belongs to the universal ribosomal protein uL4 family. As to quaternary structure, part of the 50S ribosomal subunit.

Functionally, one of the primary rRNA binding proteins, this protein initially binds near the 5'-end of the 23S rRNA. It is important during the early stages of 50S assembly. It makes multiple contacts with different domains of the 23S rRNA in the assembled 50S subunit and ribosome. Its function is as follows. Forms part of the polypeptide exit tunnel. This chain is Large ribosomal subunit protein uL4, found in Aliivibrio fischeri (strain MJ11) (Vibrio fischeri).